The following is a 370-amino-acid chain: 5-hydroxytryptamine receptor 5B (370 aa).

The disordered stretch occupies residues 1–36 (MEVSNLSGATPGLAFPPGPESCSDSPSSGRSMGSTP). The Extracellular portion of the chain corresponds to 1 to 48 (MEVSNLSGATPGLAFPPGPESCSDSPSSGRSMGSTPGGLILPGREPPF). N-linked (GlcNAc...) asparagine glycosylation occurs at asparagine 5. Over residues 20-36 (ESCSDSPSSGRSMGSTP) the composition is skewed to low complexity. A helical transmembrane segment spans residues 49-75 (SAFTVLVVTLLVLLIAATFLWNLLVLV). Topologically, residues 76-88 (TILRVRAFHRVPH) are cytoplasmic. The helical transmembrane segment at 89–115 (NLVASTAVSDVLVAVLVMPLSLVSELS) threads the bilayer. The Extracellular portion of the chain corresponds to 116-127 (AGRRWQLGRSLC). Cysteine 127 and cysteine 205 are disulfide-bonded. Residues 128–150 (HVWISFDVLCCTASIWNVAAIAL) form a helical membrane-spanning segment. Aspartate 134 is a serotonin binding site. Residues 151 to 168 (DRYWTITRHLQYTLRTRS) lie on the Cytoplasmic side of the membrane. Residues 169-189 (RASALMIAITWALSALIALAP) traverse the membrane as a helical segment. Over 190-211 (LLFGWGEAYDARLQRCQVSQEP) the chain is Extracellular. Residues 212-233 (SYAVFSTCGAFYLPLAVVLFVY) traverse the membrane as a helical segment. Residues 234 to 300 (WKIYKAAKFR…QKEKRAAMMV (67 aa)) are Cytoplasmic-facing. Residues 301–325 (GILIGVFVLCWIPFFLTELISPLCA) traverse the membrane as a helical segment. Over 326-327 (CS) the chain is Extracellular. A helical membrane pass occupies residues 328–352 (LPPIWKSIFLWLGYSNSFFNPLIYT). The Cytoplasmic portion of the chain corresponds to 353–370 (AFNKNYNNAFKSLFTKQR).

The protein belongs to the G-protein coupled receptor 1 family. In terms of tissue distribution, expressed predominantly in the central nervous system; in the hippocampus, habenula, and the doral raphe.

It localises to the cell membrane. Its function is as follows. G-protein coupled receptor for 5-hydroxytryptamine (serotonin), a biogenic hormone that functions as a neurotransmitter, a hormone and a mitogen. Also functions as a receptor for ergot alkaloid derivatives and other psychoactive substances. Ligand binding causes a conformation change that triggers signaling via guanine nucleotide-binding proteins (G proteins) and modulates the activity of downstream effectors. Htr5b is coupled to G(i)/G(o) G alpha proteins and mediates inhibitory neurotransmission: signaling inhibits adenylate cyclase activity and activates a phosphatidylinositol-calcium second messenger system that regulates the release of Ca(2+) ions from intracellular stores. The protein is 5-hydroxytryptamine receptor 5B of Mus musculus (Mouse).